The sequence spans 227 residues: Cytochrome c oxidase subunit 2 (227 aa).

Over 1–14 (MAYPFQLGLQDATS) the chain is Mitochondrial intermembrane. A helical membrane pass occupies residues 15 to 45 (PIMEELTSFHDHTLMIVFLISSLVLYIILLM). Residues 46 to 59 (LTTKLTHTSTMDAQ) lie on the Mitochondrial matrix side of the membrane. A helical membrane pass occupies residues 60–87 (EVETIWTILPAVILILIALPSLRILYMM). Over 88–227 (DEINNPALTV…HFENWSASMI (140 aa)) the chain is Mitochondrial intermembrane. 6 residues coordinate Cu cation: His-161, Cys-196, Glu-198, Cys-200, His-204, and Met-207. Residue Glu-198 coordinates Mg(2+).

It belongs to the cytochrome c oxidase subunit 2 family. Component of the cytochrome c oxidase (complex IV, CIV), a multisubunit enzyme composed of 14 subunits. The complex is composed of a catalytic core of 3 subunits MT-CO1, MT-CO2 and MT-CO3, encoded in the mitochondrial DNA, and 11 supernumerary subunits COX4I, COX5A, COX5B, COX6A, COX6B, COX6C, COX7A, COX7B, COX7C, COX8 and NDUFA4, which are encoded in the nuclear genome. The complex exists as a monomer or a dimer and forms supercomplexes (SCs) in the inner mitochondrial membrane with NADH-ubiquinone oxidoreductase (complex I, CI) and ubiquinol-cytochrome c oxidoreductase (cytochrome b-c1 complex, complex III, CIII), resulting in different assemblies (supercomplex SCI(1)III(2)IV(1) and megacomplex MCI(2)III(2)IV(2)). Found in a complex with TMEM177, COA6, COX18, COX20, SCO1 and SCO2. Interacts with TMEM177 in a COX20-dependent manner. Interacts with COX20. Interacts with COX16. Cu cation is required as a cofactor.

It is found in the mitochondrion inner membrane. The enzyme catalyses 4 Fe(II)-[cytochrome c] + O2 + 8 H(+)(in) = 4 Fe(III)-[cytochrome c] + 2 H2O + 4 H(+)(out). Component of the cytochrome c oxidase, the last enzyme in the mitochondrial electron transport chain which drives oxidative phosphorylation. The respiratory chain contains 3 multisubunit complexes succinate dehydrogenase (complex II, CII), ubiquinol-cytochrome c oxidoreductase (cytochrome b-c1 complex, complex III, CIII) and cytochrome c oxidase (complex IV, CIV), that cooperate to transfer electrons derived from NADH and succinate to molecular oxygen, creating an electrochemical gradient over the inner membrane that drives transmembrane transport and the ATP synthase. Cytochrome c oxidase is the component of the respiratory chain that catalyzes the reduction of oxygen to water. Electrons originating from reduced cytochrome c in the intermembrane space (IMS) are transferred via the dinuclear copper A center (CU(A)) of subunit 2 and heme A of subunit 1 to the active site in subunit 1, a binuclear center (BNC) formed by heme A3 and copper B (CU(B)). The BNC reduces molecular oxygen to 2 water molecules using 4 electrons from cytochrome c in the IMS and 4 protons from the mitochondrial matrix. This Anisomys imitator (Uneven-toothed rat) protein is Cytochrome c oxidase subunit 2 (MT-CO2).